Consider the following 388-residue polypeptide: Glutamate 5-kinase (388 aa).

K21 serves as a coordination point for ATP. 3 residues coordinate substrate: S61, D148, and N160. ATP-binding positions include 180 to 181 and 222 to 228; these read TD and TGGMITK. A PUA domain is found at 285–363; that stretch reads RGSVFLDPGA…RWLARELGAE (79 aa).

It belongs to the glutamate 5-kinase family.

The protein localises to the cytoplasm. It catalyses the reaction L-glutamate + ATP = L-glutamyl 5-phosphate + ADP. Its pathway is amino-acid biosynthesis; L-proline biosynthesis; L-glutamate 5-semialdehyde from L-glutamate: step 1/2. Catalyzes the transfer of a phosphate group to glutamate to form L-glutamate 5-phosphate. The chain is Glutamate 5-kinase from Thermobifida fusca (strain YX).